The chain runs to 155 residues: MLLRKYLLVTESQVSKCGFLIVKKKRDVLYPKRTKYSKYRKGRCSRGCKPDGTQLGFGRYGTKSCRAGRLSYRAIEAARRAIIGHFHRAMSGQFRRNGKIWVRVLADIPITGKPTEVRMGRGKGNPTGWIARVSRGQILFEMDGVSLSNARQALH.

The protein belongs to the universal ribosomal protein uL16 family.

The protein localises to the mitochondrion. This chain is Large ribosomal subunit protein uL16m (RPL16), found in Petunia hybrida (Petunia).